The sequence spans 375 residues: AA9 family lytic polysaccharide monooxygenase CEL1 (375 aa).

The N-terminal stretch at 1–16 (MLFPALALLCPVLVAA) is a signal peptide. Residue His-119 coordinates Cu(2+). The cysteines at positions 130 and 135 are disulfide-linked. Asn-132 carries N-linked (GlcNAc...) asparagine glycosylation. His-196 contributes to the O2 binding site. Asn-197 is a glycosylation site (N-linked (GlcNAc...) asparagine). Cu(2+) is bound at residue Tyr-212. An intrachain disulfide couples Cys-232 to Cys-237. Residues 287–375 (NGMSSSPSSS…RSRVAHLDRH (89 aa)) form a disordered region. Residues 290–341 (SSSPSSSSGVSSSSSSSVASSDTSDSTTSSGVVAVNVSAASSPSSSISANSA) show a composition bias toward low complexity. The N-linked (GlcNAc...) asparagine glycan is linked to Asn-325. Residues 347–369 (KTCKRKKRSKIAGQKRHIHRSRV) are compositionally biased toward basic residues.

The protein belongs to the polysaccharide monooxygenase AA9 family. The cofactor is Cu(2+).

Its subcellular location is the secreted. It localises to the cell wall. It carries out the reaction [(1-&gt;4)-beta-D-glucosyl]n+m + reduced acceptor + O2 = 4-dehydro-beta-D-glucosyl-[(1-&gt;4)-beta-D-glucosyl]n-1 + [(1-&gt;4)-beta-D-glucosyl]m + acceptor + H2O.. Lytic polysaccharide monooxygenase (LPMO) that depolymerizes polysaccharides via the oxidation of scissile alpha- or beta-(1-4)-glycosidic bonds, yielding C4 oxidation products. Catalysis by LPMOs requires the reduction of the active-site copper from Cu(II) to Cu(I) by a reducing agent and H(2)O(2) or O(2) as a cosubstrate. Required for the expression of stress response phenotypes, including thermotolerance, cell wall integrity, and efficient cell cycle progression. Promotes intrinsic fungal cell wall remodeling events required for efficient adaptation to the host environment. Required for virulence in a murine inhalational model of cryptococcal infection as well as in Galleria mellonella larvae. In Cryptococcus neoformans var. grubii serotype A (strain H99 / ATCC 208821 / CBS 10515 / FGSC 9487) (Filobasidiella neoformans var. grubii), this protein is AA9 family lytic polysaccharide monooxygenase CEL1.